The chain runs to 239 residues: Sugar fermentation stimulation protein homolog (239 aa).

The protein belongs to the SfsA family.

The sequence is that of Sugar fermentation stimulation protein homolog from Shewanella woodyi (strain ATCC 51908 / MS32).